The primary structure comprises 623 residues: Putative disease resistance protein At5g47280 (623 aa).

NB-ARC domains follow at residues 2-51 (LFNL…VSQS) and 119-249 (VDPR…NMLV). 16-23 (GMIGSGKT) contacts ATP. 4 LRR repeats span residues 488–511 (SLNS…SKLQ), 512–534 (ALQL…ICEL), 536–558 (RLVY…IGNV), and 560–581 (TLEK…AVSL).

The protein belongs to the disease resistance NB-LRR family.

In terms of biological role, potential disease resistance protein. The chain is Putative disease resistance protein At5g47280 from Arabidopsis thaliana (Mouse-ear cress).